We begin with the raw amino-acid sequence, 309 residues long: Olfactory receptor 5H17 (309 aa).

Residues 1–28 are Extracellular-facing; the sequence is MEKKNETLWTEFVLTGLTCLPQWKPLLF. N-linked (GlcNAc...) asparagine glycosylation is present at asparagine 5. The chain crosses the membrane as a helical span at residues 29–49; that stretch reads LVFLVIYFMTIVGNLGLITLI. Residues 50-56 are Cytoplasmic-facing; that stretch reads WNDPHLH. Residues 57-77 traverse the membrane as a helical segment; it reads IPMYLFLSNLAFVDTWLSSTV. Residues 78 to 93 lie on the Extracellular side of the membrane; sequence TPRMLFNLLDKGKVIS. The helical transmembrane segment at 94–114 threads the bilayer; that stretch reads VAECKTQFFSFAISVTTECFL. Cysteine 97 and cysteine 189 form a disulfide bridge. The Cytoplasmic segment spans residues 115–144; the sequence is LAAMAYDRYAAICNPLLYPVIMTNRLCVRL. A helical transmembrane segment spans residues 145 to 165; the sequence is LALSFIGGFLHAVIHESFLSR. Over 166-198 the chain is Extracellular; the sequence is LTFCNSNIIYHFYCDVIPLLKISCTDPSLNYLI. A helical transmembrane segment spans residues 199–219; it reads IFIFSGSIQVFTIMTVLISYT. Residues 220-239 lie on the Cytoplasmic side of the membrane; that stretch reads FVLFTILKKKSDKGIRKAFS. Residues 240-260 traverse the membrane as a helical segment; sequence TCGAHLLSVSLYYGPLLFMYV. Topologically, residues 261-271 are extracellular; that stretch reads HPASSEVDDQD. Residues 272 to 292 traverse the membrane as a helical segment; sequence MILSLFYTVIIPVLNPIIYSL. The Cytoplasmic portion of the chain corresponds to 293 to 309; sequence RNKQVIDSLKKMLKMMV.

Belongs to the G-protein coupled receptor 1 family.

Its subcellular location is the cell membrane. In terms of biological role, potential odorant receptor. The polypeptide is Olfactory receptor 5H17 (Mus musculus (Mouse)).